The sequence spans 498 residues: Lysine--tRNA ligase (498 aa).

Positions 408 and 415 each coordinate Mg(2+).

It belongs to the class-II aminoacyl-tRNA synthetase family. In terms of assembly, homodimer. Requires Mg(2+) as cofactor.

The protein localises to the cytoplasm. The catalysed reaction is tRNA(Lys) + L-lysine + ATP = L-lysyl-tRNA(Lys) + AMP + diphosphate. This Listeria welshimeri serovar 6b (strain ATCC 35897 / DSM 20650 / CCUG 15529 / CIP 8149 / NCTC 11857 / SLCC 5334 / V8) protein is Lysine--tRNA ligase.